A 280-amino-acid chain; its full sequence is MATTIKFTKMQGTGNDYIYVNTLSSPLQDPIKAARKWSTYHTGIGADGLVLIGASEKADFSMRIFNADGSEAMMCGNASRCIGKYVYEKGLTDKEVITLETLSGIKILKLHTGNGVVKDVTVDMGTPLLSNPGQIATKTGGMLAETIPADGKEYKGTFVCMGNPHVVIFVDDIKEVDLPAVGPKLENHPLFPERTNVEFVEILPDQSLRMRVWERGSGITMACGTGACATAVAAVLNHKAGRKSWVRMDGGDLHIHWNEKDGHVYMTGPAGKVFEGEIEM.

Substrate is bound by residues N15 and N66. C75 acts as the Proton donor in catalysis. Substrate is bound by residues 76–77 (GN), N163, N196, and 214–215 (ER). C223 serves as the catalytic Proton acceptor. A substrate-binding site is contributed by 224–225 (GT).

This sequence belongs to the diaminopimelate epimerase family. As to quaternary structure, homodimer.

The protein resides in the cytoplasm. It carries out the reaction (2S,6S)-2,6-diaminopimelate = meso-2,6-diaminopimelate. The protein operates within amino-acid biosynthesis; L-lysine biosynthesis via DAP pathway; DL-2,6-diaminopimelate from LL-2,6-diaminopimelate: step 1/1. Functionally, catalyzes the stereoinversion of LL-2,6-diaminopimelate (L,L-DAP) to meso-diaminopimelate (meso-DAP), a precursor of L-lysine and an essential component of the bacterial peptidoglycan. The protein is Diaminopimelate epimerase of Phocaeicola vulgatus (strain ATCC 8482 / DSM 1447 / JCM 5826 / CCUG 4940 / NBRC 14291 / NCTC 11154) (Bacteroides vulgatus).